Here is a 214-residue protein sequence, read N- to C-terminus: Phosphatidylserine decarboxylase proenzyme (214 aa).

The active-site Schiff-base intermediate with substrate; via pyruvic acid is serine 182. Serine 182 is modified (pyruvic acid (Ser); by autocatalysis).

Belongs to the phosphatidylserine decarboxylase family. PSD-A subfamily. In terms of assembly, heterodimer of a large membrane-associated beta subunit and a small pyruvoyl-containing alpha subunit. Pyruvate is required as a cofactor. Post-translationally, is synthesized initially as an inactive proenzyme. Formation of the active enzyme involves a self-maturation process in which the active site pyruvoyl group is generated from an internal serine residue via an autocatalytic post-translational modification. Two non-identical subunits are generated from the proenzyme in this reaction, and the pyruvate is formed at the N-terminus of the alpha chain, which is derived from the carboxyl end of the proenzyme. The post-translation cleavage follows an unusual pathway, termed non-hydrolytic serinolysis, in which the side chain hydroxyl group of the serine supplies its oxygen atom to form the C-terminus of the beta chain, while the remainder of the serine residue undergoes an oxidative deamination to produce ammonia and the pyruvoyl prosthetic group on the alpha chain.

The protein localises to the cell membrane. The enzyme catalyses a 1,2-diacyl-sn-glycero-3-phospho-L-serine + H(+) = a 1,2-diacyl-sn-glycero-3-phosphoethanolamine + CO2. It functions in the pathway phospholipid metabolism; phosphatidylethanolamine biosynthesis; phosphatidylethanolamine from CDP-diacylglycerol: step 2/2. Functionally, catalyzes the formation of phosphatidylethanolamine (PtdEtn) from phosphatidylserine (PtdSer). This is Phosphatidylserine decarboxylase proenzyme from Burkholderia cenocepacia (strain HI2424).